The following is a 371-amino-acid chain: Cytochrome b (371 aa).

4 helical membrane passes run 25–45 (FGSMLLACLALQVLTGFFLAV), 69–90 (WMMQNLHAIGASMFFICIYIHI), 105–125 (WMSGITLLITLMATAFFGYVL), and 170–190 (FFALHFILPFAIISMSSLHII). Heme b is bound by residues H75 and H89. H174 and H188 together coordinate heme b. Position 193 (H193) interacts with a ubiquinone. Transmembrane regions (helical) follow at residues 218 to 238 (YKDLLFLTLMILFMLIIVSFF), 280 to 300 (LGGALALVMSIMILFIIPFTH), 312 to 332 (LSQLMFWTLVSTFITITWAAT), and 339 to 358 (YIIISQVTATLYFIFFISMP).

This sequence belongs to the cytochrome b family. As to quaternary structure, the cytochrome bc1 complex contains 3 respiratory subunits (MT-CYB, CYC1 and UQCRFS1), 2 core proteins (UQCRC1 and UQCRC2) and probably 6 low-molecular weight proteins. Heme b is required as a cofactor.

Its subcellular location is the mitochondrion inner membrane. In terms of biological role, component of the ubiquinol-cytochrome c reductase complex (complex III or cytochrome b-c1 complex) that is part of the mitochondrial respiratory chain. The b-c1 complex mediates electron transfer from ubiquinol to cytochrome c. Contributes to the generation of a proton gradient across the mitochondrial membrane that is then used for ATP synthesis. This is Cytochrome b (MT-CYB) from Python molurus (Indian python).